The chain runs to 256 residues: H-2 class II histocompatibility antigen, A-K alpha chain (256 aa).

The first 23 residues, 1–23 (MPRSRALILGVLALTTMLSLCGG), serve as a signal peptide directing secretion. Residues 24 to 111 (EDDIEADHVG…KRSNSTPATN (88 aa)) form an alpha-1 region. Residues 24–218 (EDDIEADHVG…IPAPMSELTE (195 aa)) are Extracellular-facing. N-linked (GlcNAc...) asparagine glycosylation is found at Asn-105 and Asn-145. The segment at 112-205 (EAPQATVFPK…GLEEPVLKHW (94 aa)) is alpha-2. The region spanning 114–206 (PQATVFPKSP…LEEPVLKHWE (93 aa)) is the Ig-like C1-type domain. Cysteines 134 and 190 form a disulfide. The segment at 206 to 218 (EPEIPAPMSELTE) is connecting peptide. A helical transmembrane segment spans residues 219-241 (TVVCALGLSVGLVGIVVGTIFII). Residues 242-256 (QGLRSGGTSRHPGPL) lie on the Cytoplasmic side of the membrane.

This sequence belongs to the MHC class II family.

It localises to the membrane. The protein is H-2 class II histocompatibility antigen, A-K alpha chain (H2-Aa) of Mus musculus (Mouse).